We begin with the raw amino-acid sequence, 23 residues long: Alyteserin-1a (23 aa).

An Asparagine amide modification is found at asparagine 23.

As to expression, expressed by the skin glands.

It is found in the secreted. The protein localises to the target cell membrane. Antibacterial peptide with amphipathic alpha-helical structure. Shows selective growth inhibitory activity against the Gram-negative bacteria E.coli (MIC=25 uM) Has a weak hemolytic activity against human erythrocytes (LC(50)&gt;100 uM). Is very weakly active against S.aureus (MIC=200 uM). This is Alyteserin-1a from Alytes obstetricans (Common midwife toad).